We begin with the raw amino-acid sequence, 469 residues long: Putative F-box/LRR-repeat protein At5g02930 (469 aa).

In terms of domain architecture, F-box spans 27-77 (VDSISDLPDAVLQHIFSYIPTELAIRTSVLSKRWRHVWSETPHLSFEWLKV). LRR repeat units lie at residues 30–58 (ISDL…VLSK), 178–203 (DCTM…SLKF), 204–214 (CMSLKYLNLSK), 223–250 (IERI…RLRD), 296–321 (TMLK…SLSK), and 341–366 (IIRS…TVYT).

This chain is Putative F-box/LRR-repeat protein At5g02930, found in Arabidopsis thaliana (Mouse-ear cress).